Reading from the N-terminus, the 62-residue chain is Photosystem II reaction center protein Z (62 aa).

2 helical membrane passes run A8 to A28 and F41 to I61.

The protein belongs to the PsbZ family. PSII is composed of 1 copy each of membrane proteins PsbA, PsbB, PsbC, PsbD, PsbE, PsbF, PsbH, PsbI, PsbJ, PsbK, PsbL, PsbM, PsbT, PsbY, PsbZ, Psb30/Ycf12, at least 3 peripheral proteins of the oxygen-evolving complex and a large number of cofactors. It forms dimeric complexes.

The protein localises to the plastid. The protein resides in the chloroplast thylakoid membrane. Functionally, may control the interaction of photosystem II (PSII) cores with the light-harvesting antenna, regulates electron flow through the 2 photosystem reaction centers. PSII is a light-driven water plastoquinone oxidoreductase, using light energy to abstract electrons from H(2)O, generating a proton gradient subsequently used for ATP formation. The chain is Photosystem II reaction center protein Z from Daucus carota (Wild carrot).